The following is a 359-amino-acid chain: Peptide chain release factor 1 (359 aa).

N5-methylglutamine is present on Gln-233.

The protein belongs to the prokaryotic/mitochondrial release factor family. In terms of processing, methylated by PrmC. Methylation increases the termination efficiency of RF1.

It localises to the cytoplasm. Functionally, peptide chain release factor 1 directs the termination of translation in response to the peptide chain termination codons UAG and UAA. This chain is Peptide chain release factor 1, found in Clostridium acetobutylicum (strain ATCC 824 / DSM 792 / JCM 1419 / IAM 19013 / LMG 5710 / NBRC 13948 / NRRL B-527 / VKM B-1787 / 2291 / W).